The primary structure comprises 229 residues: UPF0758 protein GSU0386 (229 aa).

The region spanning 107 to 229 is the MPN domain; it reads RFTSPEQVYN…FTSFVSAGLL (123 aa). Residues His178, His180, and Asp191 each contribute to the Zn(2+) site. Positions 178–191 match the JAMM motif motif; it reads HNHPTGDPAPSRED.

The protein belongs to the UPF0758 family.

The chain is UPF0758 protein GSU0386 from Geobacter sulfurreducens (strain ATCC 51573 / DSM 12127 / PCA).